Reading from the N-terminus, the 504-residue chain is ATP synthase subunit alpha, chloroplastic (504 aa).

ATP is bound at residue 170–177 (GDRQTGKT). Phosphothreonine is present on threonine 257.

It belongs to the ATPase alpha/beta chains family. As to quaternary structure, F-type ATPases have 2 components, CF(1) - the catalytic core - and CF(0) - the membrane proton channel. CF(1) has five subunits: alpha(3), beta(3), gamma(1), delta(1), epsilon(1). CF(0) has four main subunits: a, b, b' and c.

The protein resides in the plastid. It is found in the chloroplast thylakoid membrane. The enzyme catalyses ATP + H2O + 4 H(+)(in) = ADP + phosphate + 5 H(+)(out). Produces ATP from ADP in the presence of a proton gradient across the membrane. The alpha chain is a regulatory subunit. The protein is ATP synthase subunit alpha, chloroplastic of Nasturtium officinale (Watercress).